The sequence spans 1217 residues: Disease resistance protein RPS4 (1217 aa).

Positions 14–175 (PQHQVFINFR…EIVKAVKTAL (162 aa)) constitute a TIR domain. Position 23 to 28 (23 to 28 (RGADLR)) interacts with NAD(+). Positions 33 to 34 (SH) are important for interaction with RRS1. Residue Glu-88 is part of the active site. The region spanning 211-472 (EQRLKDLEEK…FRSQDKDYVE (262 aa)) is the NB-ARC domain. LRR repeat units follow at residues 581 to 606 (MGNLRYLKFYNSHCPQECKTNNKINI), 614 to 636 (LKEVRCLHWLKFPLETLPNDFNP), 637 to 659 (INLVDLKLPYSEMEQLWEGDKDT), 682 to 706 (AEKLQRLNLEGCTTLKAFPHDMKKM), 708 to 728 (MLAFLNLKGCTSLESLPEMNL), 729 to 749 (ISLKTLTLSGCSTFKEFPLIS), 750 to 774 (DNIETLYLDGTAISQLPMNMEKLQR), 796 to 818 (LKALQELILSDCLNLKIFPEIDI), 819 to 842 (SFLNILLLDGTAIEVMPQLPSVQY), 843 to 860 (LCLSRNAKISCLPVGISQ), and 861 to 887 (LSQLKWLDLKYCTSLTSVPEFPPNLQC). A disordered region spans residues 1161 to 1195 (TTEGVDGRVNKKKKTRMDNGRPKKKQRSGRDDNQT). The Nuclear localization signal signature appears at 1170–1177 (NKKKKTRM).

This sequence belongs to the disease resistance TIR-NB-LRR family. In terms of assembly, interacts with EDS1. Interacts with SRFR1. Interacts with RRS1.

It is found in the endomembrane system. The protein resides in the cytoplasm. It localises to the nucleus. The enzyme catalyses NAD(+) + H2O = ADP-D-ribose + nicotinamide + H(+). Disease resistance (R) protein that specifically recognizes the AvrRps4 type III effector avirulence protein from P.syringae. Resistance proteins guard the plant against pathogens that contain an appropriate avirulence protein via an indirect interaction with this avirulence protein. That triggers a defense system including the hypersensitive response, which restricts the pathogen growth. Probably acts as a NAD(+) hydrolase (NADase): in response to activation, catalyzes cleavage of NAD(+) into ADP-D-ribose (ADPR) and nicotinamide; NAD(+) cleavage triggering a defense system that promotes cell death. The combined presence of both regular and alternative RPS4 transcripts with truncated open reading frames (ORFs) is necessary for function. RPS4 function is regulated at multiple levels, including gene expression, alternative splicing, and protein stability. When over-expressed, confers temperature-conditioned EDS1-dependent auto-immunity. Heterodimerization with RRS1 is required to form a functional complex to recognize AvrRps4 and PopP2. Abscisic acid deficiency enhances nuclear accumulation of RPS4 and its cell death-inducing activity. The polypeptide is Disease resistance protein RPS4 (Arabidopsis thaliana (Mouse-ear cress)).